The sequence spans 201 residues: Flagellin B1 (201 aa).

A propeptide spanning residues Met-1 to Gly-11 is cleaved from the precursor.

The protein belongs to the archaeal flagellin family.

It is found in the archaeal flagellum. In terms of biological role, flagellin is the subunit protein which polymerizes to form the filaments of archaeal flagella. This is Flagellin B1 (flaB1) from Natrialba magadii (strain ATCC 43099 / DSM 3394 / CCM 3739 / CIP 104546 / IAM 13178 / JCM 8861 / NBRC 102185 / NCIMB 2190 / MS3) (Natronobacterium magadii).